A 213-amino-acid polypeptide reads, in one-letter code: Maleamate amidohydrolase (213 aa).

Cysteine 154 acts as the Nucleophile in catalysis.

The protein belongs to the isochorismatase family.

The catalysed reaction is maleamate + H2O = maleate + NH4(+). The protein operates within cofactor degradation; nicotinate degradation. In terms of biological role, maleamate amidase that transforms maleamate into maleate and ammonia in the aerobic nicotinate degradation pathway. The polypeptide is Maleamate amidohydrolase (nicF) (Pseudomonas putida (strain ATCC 47054 / DSM 6125 / CFBP 8728 / NCIMB 11950 / KT2440)).